The following is a 175-amino-acid chain: Translation initiation factor IF-3, chloroplastic (175 aa).

The protein belongs to the IF-3 family. As to quaternary structure, monomer.

Its subcellular location is the plastid. It is found in the chloroplast. Its function is as follows. IF-3 binds to the 30S ribosomal subunit and shifts the equilibrium between 70S ribosomes and their 50S and 30S subunits in favor of the free subunits, thus enhancing the availability of 30S subunits on which protein synthesis initiation begins. This chain is Translation initiation factor IF-3, chloroplastic, found in Cyanidioschyzon merolae (strain NIES-3377 / 10D) (Unicellular red alga).